We begin with the raw amino-acid sequence, 511 residues long: Histidine ammonia-lyase (511 aa).

The 5-imidazolinone (Ala-Gly) cross-link spans 142–144 (ASG). A 2,3-didehydroalanine (Ser) modification is found at Ser143.

The protein belongs to the PAL/histidase family. Contains an active site 4-methylidene-imidazol-5-one (MIO), which is formed autocatalytically by cyclization and dehydration of residues Ala-Ser-Gly.

The protein localises to the cytoplasm. The enzyme catalyses L-histidine = trans-urocanate + NH4(+). The protein operates within amino-acid degradation; L-histidine degradation into L-glutamate; N-formimidoyl-L-glutamate from L-histidine: step 1/3. The protein is Histidine ammonia-lyase (hutH) of Rhizobium meliloti (strain 1021) (Ensifer meliloti).